Reading from the N-terminus, the 363-residue chain is Cytoplasmic tRNA 2-thiolation protein 1 (363 aa).

The interval 337 to 363 is disordered; sequence DGDCEQQATRSERNRSSLQGKHGNFDF.

This sequence belongs to the TtcA family. CTU1/NCS6/ATPBD3 subfamily.

Its subcellular location is the cytoplasm. It participates in tRNA modification; 5-methoxycarbonylmethyl-2-thiouridine-tRNA biosynthesis. Plays a central role in 2-thiolation of mcm(5)S(2)U at tRNA wobble positions of tRNA(Lys), tRNA(Glu) and tRNA(Gln). Directly binds tRNAs and probably acts by catalyzing adenylation of tRNAs, an intermediate required for 2-thiolation. It is unclear whether it acts as a sulfurtransferase that transfers sulfur from thiocarboxylated URM1 onto the uridine of tRNAs at wobble position. This Oryza sativa subsp. japonica (Rice) protein is Cytoplasmic tRNA 2-thiolation protein 1.